We begin with the raw amino-acid sequence, 457 residues long: Adenylosuccinate synthetase (457 aa).

GTP contacts are provided by residues 40–46 and 70–72; these read GDEGKGK and GHT. Asp41 acts as the Proton acceptor in catalysis. The Mg(2+) site is built by Asp41 and Gly70. IMP-binding positions include 41–44, 68–71, Thr161, Arg175, Asn255, Thr270, and Arg334; these read DEGK and NAGH. The Proton donor role is filled by His71. 330–336 contacts substrate; the sequence is VTTGRKR. GTP is bound by residues Arg336, 362 to 364, and 444 to 446; these read KLD and GVG.

This sequence belongs to the adenylosuccinate synthetase family. In terms of assembly, homodimer. The cofactor is Mg(2+).

The protein resides in the cytoplasm. The enzyme catalyses IMP + L-aspartate + GTP = N(6)-(1,2-dicarboxyethyl)-AMP + GDP + phosphate + 2 H(+). The protein operates within purine metabolism; AMP biosynthesis via de novo pathway; AMP from IMP: step 1/2. Functionally, plays an important role in the de novo pathway and in the salvage pathway of purine nucleotide biosynthesis. Catalyzes the first committed step in the biosynthesis of AMP from IMP. This Caenorhabditis elegans protein is Adenylosuccinate synthetase.